The primary structure comprises 217 residues: Ribose-5-phosphate isomerase A (217 aa).

Residues 28–31 (TGST), 81–84 (DGAD), and 94–97 (KGGG) contribute to the substrate site. The Proton acceptor role is filled by Glu103. Lys121 serves as a coordination point for substrate.

It belongs to the ribose 5-phosphate isomerase family. As to quaternary structure, homodimer.

The enzyme catalyses aldehydo-D-ribose 5-phosphate = D-ribulose 5-phosphate. Its pathway is carbohydrate degradation; pentose phosphate pathway; D-ribose 5-phosphate from D-ribulose 5-phosphate (non-oxidative stage): step 1/1. In terms of biological role, catalyzes the reversible conversion of ribose-5-phosphate to ribulose 5-phosphate. This is Ribose-5-phosphate isomerase A from Aeromonas hydrophila subsp. hydrophila (strain ATCC 7966 / DSM 30187 / BCRC 13018 / CCUG 14551 / JCM 1027 / KCTC 2358 / NCIMB 9240 / NCTC 8049).